Consider the following 606-residue polypeptide: Calmegin (606 aa).

The first 19 residues, Met-1–Ala-19, serve as a signal peptide directing secretion. Residues Glu-20–Pro-466 lie on the Lumenal side of the membrane. An N6-acetyllysine modification is found at Lys-124. Cys-147 and Cys-181 are oxidised to a cystine. The segment at Pro-255 to Asp-308 is disordered. 8 tandem repeats follow at residues Ile-263–Glu-276, Ile-280–Glu-293, Ile-299–Asp-312, Ile-318–Glu-331, Gly-335–Arg-348, Gly-352–Lys-365, Gly-366–Gln-379, and Gly-380–Phe-393. Acidic residues predominate over residues Asp-265–Asp-275. An interaction with PPIB region spans residues Asn-313 to Ala-346. Cys-347 and Cys-351 form a disulfide bridge. A helical membrane pass occupies residues Trp-467–Cys-487. Residues Trp-488–Glu-606 lie on the Cytoplasmic side of the membrane. The segment covering Glu-518–Val-544 has biased composition (basic and acidic residues). The segment at Glu-518–Glu-606 is disordered. The span at Glu-545–Glu-567 shows a compositional bias: acidic residues. 7 positions are modified to phosphoserine: Ser-556, Ser-572, Ser-575, Ser-577, Ser-587, Ser-590, and Ser-597. A compositionally biased stretch (basic and acidic residues) spans Glu-568 to Asp-579. A compositionally biased stretch (basic residues) spans Ser-597–Glu-606.

This sequence belongs to the calreticulin family. Interacts with PPIB and PDILT. Interacts with ADAM2.

It is found in the endoplasmic reticulum membrane. Functions during spermatogenesis as a chaperone for a range of client proteins that are important for sperm adhesion onto the egg zona pellucida and for subsequent penetration of the zona pellucida. Required for normal sperm migration from the uterus into the oviduct. Required for normal male fertility. Binds calcium ions. The chain is Calmegin (CLGN) from Bos taurus (Bovine).